We begin with the raw amino-acid sequence, 577 residues long: Solute carrier family 22 member 16 (577 aa).

The helical transmembrane segment at 23 to 43 (LYFICAFQNISCGIHYLASVF) threads the bilayer. Residues asparagine 57, asparagine 65, asparagine 68, and asparagine 108 are each glycosylated (N-linked (GlcNAc...) asparagine). The next 5 membrane-spanning stretches (helical) occupy residues 152–172 (WLAM…SVTF), 183–203 (VVLW…AFAV), 214–234 (FLAM…MEFI), 244–264 (VHLH…GYLV), and 268–288 (WLYQ…CWVL). N-linked (GlcNAc...) asparagine glycosylation is found at asparagine 345 and asparagine 352. Transmembrane regions (helical) follow at residues 359 to 379 (TLTV…FSLN), 389 to 409 (LNLF…CIAM), 416 to 436 (TVLA…MVIP), 441 to 461 (ILGV…FGLI), 476 to 496 (LAVG…PFSV), and 501 to 521 (IWIF…GVLT). Residues 543–577 (ESENESKSSKLLLTTNNSGLEKTEAITPRDSGLGE) are disordered. N-linked (GlcNAc...) asparagine glycosylation is found at asparagine 546 and asparagine 558. Over residues 551 to 560 (SKLLLTTNNS) the composition is skewed to low complexity.

It belongs to the major facilitator (TC 2.A.1) superfamily. Organic cation transporter (TC 2.A.1.19) family. In terms of tissue distribution, expressed in testis and epididymis (at protein level). Expressed in endometrium (at protein level); highly expressed during the normal secretory phase, but expression is significantly reduced in the proliferative phase. Expressed at lower levels in adult tissues including bone marrow (at protein level). Expressed in hematopoietic cells, including CD34(+) leukocytes. Expressed in fetal liver (at protein level), brain, lung, kidney, heart, skeletal muscle, spleen and thymus. Expressed in leukemia cells. Abundantly expressed in ovarian cancer clear-cell adenocarcinoma.

Its subcellular location is the cell membrane. It catalyses the reaction (R)-carnitine(in) = (R)-carnitine(out). The enzyme catalyses spermidine(in) = spermidine(out). Its function is as follows. Facilitative organic cation transporter that mediates the transport of carnitine as well as the polyamine spermidine. Mediates the partially Na(+)-dependent bidirectional transport of carnitine. May mediate L-carnitine secretion from testis epididymal epithelium into the lumen which is involved in the maturation of spermatozoa. This Homo sapiens (Human) protein is Solute carrier family 22 member 16.